The sequence spans 445 residues: DDB1- and CUL4-associated factor 13 (445 aa).

WD repeat units follow at residues 64 to 104 (GHRD…CIRA), 107 to 146 (AHEGFVRGMCARFCGTSFFTVGDDKTVKQWKMESPGYGEE), 149 to 191 (PIHT…PMCS), 194 to 234 (WGFD…PLKK), 236 to 276 (ILNM…SPVM), 280 to 321 (DHVS…EVYH), and 323 to 362 (KRMQHVITVKWTSDSRYILCGSDEMNIRLWKANASEKLGV). The segment at 353-441 (KANASEKLGV…VVSEKKKHIV (89 aa)) is required for nucleolar location.

This sequence belongs to the WD repeat DCAF13/WDSOF1 family. As to quaternary structure, part of the small subunit (SSU) processome, composed of more than 70 proteins and the RNA chaperone small nucleolar RNA (snoRNA) U3. Component of the DCX(DCAF13) E3 ubiquitin ligase complex, at least composed of CUL4 (CUL4A or CUL4B), DDB1, DCAF13 and RBX1.

The protein localises to the nucleus. It is found in the nucleolus. The protein operates within protein modification; protein ubiquitination. Part of the small subunit (SSU) processome, first precursor of the small eukaryotic ribosomal subunit. During the assembly of the SSU processome in the nucleolus, many ribosome biogenesis factors, an RNA chaperone and ribosomal proteins associate with the nascent pre-rRNA and work in concert to generate RNA folding, modifications, rearrangements and cleavage as well as targeted degradation of pre-ribosomal RNA by the RNA exosome. Functionally, substrate-recognition component of a DCX (DDB1-CUL4-X-box) E3 ubiquitin-protein ligase complex. The chain is DDB1- and CUL4-associated factor 13 (DCAF13) from Gallus gallus (Chicken).